Consider the following 851-residue polypeptide: Beta-galactosidase 3 (851 aa).

The N-terminal stretch at 1 to 29 is a signal peptide; sequence MAGASSYFSLRRLLLLLLPLVPLLGATTA. Residue N35 is glycosylated (N-linked (GlcNAc...) asparagine). E194 functions as the Proton donor in the catalytic mechanism. E263 functions as the Nucleophile in the catalytic mechanism. Residues N361, N475, N528, and N533 are each glycosylated (N-linked (GlcNAc...) asparagine). The SUEL-type lectin domain occupies 765–851; that stretch reads GRDAAKVQLS…KTLAIEADCS (87 aa).

Belongs to the glycosyl hydrolase 35 family.

It localises to the secreted. The protein localises to the extracellular space. It is found in the apoplast. The catalysed reaction is Hydrolysis of terminal non-reducing beta-D-galactose residues in beta-D-galactosides.. The polypeptide is Beta-galactosidase 3 (Oryza sativa subsp. japonica (Rice)).